A 276-amino-acid polypeptide reads, in one-letter code: Large ribosomal subunit protein uL2 (276 aa).

Disordered regions lie at residues 37–59 (QFQK…GGHK) and 225–276 (VMNP…RHKR). The segment covering 39–49 (QKSGRNNNGHI) has biased composition (polar residues). Residues 50-59 (TTRHKGGGHK) show a composition bias toward basic residues.

This sequence belongs to the universal ribosomal protein uL2 family. Part of the 50S ribosomal subunit. Forms a bridge to the 30S subunit in the 70S ribosome.

In terms of biological role, one of the primary rRNA binding proteins. Required for association of the 30S and 50S subunits to form the 70S ribosome, for tRNA binding and peptide bond formation. It has been suggested to have peptidyltransferase activity; this is somewhat controversial. Makes several contacts with the 16S rRNA in the 70S ribosome. The protein is Large ribosomal subunit protein uL2 of Cupriavidus pinatubonensis (strain JMP 134 / LMG 1197) (Cupriavidus necator (strain JMP 134)).